The following is a 545-amino-acid chain: T-box transcription factor TBX4 (545 aa).

Residues 71–251 (LHEKELWKKF…NNPFAKGFRG (181 aa)) constitute a DNA-binding region (T-box). Residues 479-509 (QSQVRERGPSASFPRERGLPQGCERKPPSPH) form a disordered region. The span at 482–505 (VRERGPSASFPRERGLPQGCERKP) shows a compositional bias: basic and acidic residues. Ser507 carries the post-translational modification Phosphoserine.

It is found in the nucleus. In terms of biological role, transcriptional regulator that has an essential role in the organogenesis of lungs, pelvis, and hindlimbs. The sequence is that of T-box transcription factor TBX4 (TBX4) from Homo sapiens (Human).